The chain runs to 393 residues: Cytohesin-4 (393 aa).

The stretch at 13–56 forms a coiled coil; it reads SGEAKELQQIKWHRKQLLEDIQKLKDEIADVFAQIDCFESTEES. In terms of domain architecture, SEC7 spans 54–241; the sequence is EESRMAQKEK…RNLFDSIKSE (188 aa). Residues 259-375 form the PH domain; the sequence is NPDREGWLLK…WIEAIRASIT (117 aa). A 1,2-diacyl-sn-glycero-3-phospho-(1D-myo-inositol-3,4,5-trisphosphate) contacts are provided by residues 268–275, Arg279, Tyr290, and Arg300; that span reads KLGGRVKT. A C-terminal autoinhibitory region region spans residues 386–393; it reads RKKKIVGK.

It is found in the cell membrane. In terms of biological role, promotes guanine-nucleotide exchange on ARF1 and ARF5. Promotes the activation of ARF factors through replacement of GDP with GTP. The sequence is that of Cytohesin-4 (Cyth4) from Mus musculus (Mouse).